A 208-amino-acid chain; its full sequence is T-cell surface glycoprotein CD8 beta chain (208 aa).

Residues M1 to A21 form the signal peptide. Residues L22–L131 form the Ig-like V-type domain. Residues L22 to L168 are Extracellular-facing. N34, N88, and N94 each carry an N-linked (GlcNAc...) asparagine glycan. An intrachain disulfide couples C41 to C115. A helical membrane pass occupies residues I169–I189. Residues H190–K208 are Cytoplasmic-facing.

In terms of assembly, forms disulfide-linked heterodimers with CD8A at the cell surface. Interacts with CD3D; this interaction couples TCR-CD3 with CD8. Interacts with LCK. In terms of processing, phosphorylated as a consequence of T-cell activation. Post-translationally, palmitoylated at the cytoplasmic tail and thereby targets the heterodimer CD8A/CD8B to lipid rafts unlike CD8A homodimers.

The protein localises to the cell membrane. Functionally, integral membrane glycoprotein that plays an essential role in the immune response and serves multiple functions in responses against both external and internal offenses. In T-cells, functions primarily as a coreceptor for MHC class I molecule:peptide complex. The antigens presented by class I peptides are derived from cytosolic proteins while class II derived from extracellular proteins. Interacts simultaneously with the T-cell receptor (TCR) and the MHC class I proteins presented by antigen presenting cells (APCs). In turn, recruits the Src kinase LCK to the vicinity of the TCR-CD3 complex. A palmitoylation site in the cytoplasmic tail of CD8B chain contributes to partitioning of CD8 into the plasma membrane lipid rafts where signaling proteins are enriched. Once LCK recruited, it initiates different intracellular signaling pathways by phosphorylating various substrates ultimately leading to lymphokine production, motility, adhesion and activation of cytotoxic T-lymphocytes (CTLs). Additionally, plays a critical role in thymic selection of CD8+ T-cells. This Rattus norvegicus (Rat) protein is T-cell surface glycoprotein CD8 beta chain (Cd8b).